Here is a 218-residue protein sequence, read N- to C-terminus: MIEVLNLTKKIKKTTVLDNISYTFEKGTIYGLFGSNGSGKTMLLRALSGLIVPTEGSITIKGEQLHKDISFPKSVGLIIENMQLLPQYDAFTNLKILSKIKKIASDNDILDSISRVGLENFNSVKVSKFSLGMKQRLNIAQAIFEKPDILLLDEPTNAIDEKGVAFVHDILLQEKKRGATIIITSHHKEDIISLCDIALEMNHGRLETSEKVIYKKDS.

The ABC transporter domain occupies 2 to 216 (IEVLNLTKKI…ETSEKVIYKK (215 aa)). 34–41 (GSNGSGKT) provides a ligand contact to ATP.

It belongs to the ABC transporter superfamily.

This is an uncharacterized protein from Bacillus subtilis (strain 168).